A 525-amino-acid chain; its full sequence is GMP synthase [glutamine-hydrolyzing] (525 aa).

The Glutamine amidotransferase type-1 domain occupies 12-206 (RILIIDFGSQ…THGICGCGGD (195 aa)). The active-site Nucleophile is Cys90. Catalysis depends on residues His180 and Glu182. One can recognise a GMPS ATP-PPase domain in the interval 207-399 (WTMAAFKDQA…LGLPDEMVGR (193 aa)). 234-240 (SGGVDSS) lines the ATP pocket.

In terms of assembly, homodimer.

It carries out the reaction XMP + L-glutamine + ATP + H2O = GMP + L-glutamate + AMP + diphosphate + 2 H(+). It functions in the pathway purine metabolism; GMP biosynthesis; GMP from XMP (L-Gln route): step 1/1. Its function is as follows. Catalyzes the synthesis of GMP from XMP. The sequence is that of GMP synthase [glutamine-hydrolyzing] from Rhodospirillum rubrum (strain ATCC 11170 / ATH 1.1.1 / DSM 467 / LMG 4362 / NCIMB 8255 / S1).